A 21-amino-acid chain; its full sequence is Outer membrane protein P2 (21 aa).

Disulfide bond interactions within and between MOMP molecules and other components form high molecular-weight oligomers.

Its subcellular location is the cell outer membrane. Structural rigidity of the outer membrane of elementary bodies and porin forming, permitting diffusion of solutes through the intracellular reticulate body membrane. Binds carcinoembryonic antigen (CEA). The chain is Outer membrane protein P2 from Glaesserella parasuis (Haemophilus parasuis).